A 421-amino-acid polypeptide reads, in one-letter code: Carboxypeptidase A4 (421 aa).

An N-terminal signal peptide occupies residues 1–16 (MRWILFIGALIGSSIC). The propeptide at 17 to 113 (GQEKFFGDQV…EMQHNEGQER (97 aa)) is activation peptide. 8 residues coordinate a protein: proline 69, valine 71, asparagine 119, tyrosine 123, histidine 124, serine 125, glutamate 127, and phenylalanine 163. The Peptidase M14 domain maps to 122-416 (AYHSLEAIYH…LGLKTIMEHV (295 aa)). 2 residues coordinate Zn(2+): histidine 181 and glutamate 184. Positions 196, 197, and 248 each coordinate a protein. An intrachain disulfide couples cysteine 250 to cysteine 273. N-linked (GlcNAc...) asparagine glycosylation occurs at asparagine 260. Aspartate 270 lines the a protein pocket. A Zn(2+)-binding site is contributed by histidine 308. Glutamate 382 serves as the catalytic Proton donor/acceptor.

It belongs to the peptidase M14 family. As to quaternary structure, monomer. Interacts with LXN. It depends on Zn(2+) as a cofactor. Fetal expression in the adrenal gland, brain, heart, intestine, kidney, liver and lung. Except for fetal brain that shows no imprinting, expression was found preferentially from the maternal allele.

The protein localises to the secreted. Inhibited by interaction with the metallocarboxypeptidase inhibitor (MCPI) from N.versicolor that binds to the catalytic zinc ion. Also inhibited by interaction with the S.magnifica carboxypeptidase inhibitor SmCI that penetrates the active site groove and inhibits activity by emulating a C-terminal substrate. Additionally inhibited by a carboxypeptidase inhibitor from H.medicinalis (leech) and R.bursa (tick). Its function is as follows. Metalloprotease that cleaves hydrophobic C-terminal residues with a preference for -Phe, -Leu, -Ile, -Met, -Tyr and -Val. May function in peptide hormone and/or neuropeptide catabolism. The sequence is that of Carboxypeptidase A4 (CPA4) from Homo sapiens (Human).